Consider the following 103-residue polypeptide: Gene 56 protein (103 aa).

Positions 9-103 constitute a Glutaredoxin domain; that stretch reads WDGAHVRTLF…DYYTASETGL (95 aa).

The polypeptide is Gene 56 protein (56) (Mycobacterium phage L5 (Mycobacteriophage L5)).